Here is a 230-residue protein sequence, read N- to C-terminus: Enolase-phosphatase E1 (230 aa).

It belongs to the HAD-like hydrolase superfamily. MasA/MtnC family. Monomer. The cofactor is Mg(2+).

It carries out the reaction 5-methylsulfanyl-2,3-dioxopentyl phosphate + H2O = 1,2-dihydroxy-5-(methylsulfanyl)pent-1-en-3-one + phosphate. It participates in amino-acid biosynthesis; L-methionine biosynthesis via salvage pathway; L-methionine from S-methyl-5-thio-alpha-D-ribose 1-phosphate: step 3/6. It functions in the pathway amino-acid biosynthesis; L-methionine biosynthesis via salvage pathway; L-methionine from S-methyl-5-thio-alpha-D-ribose 1-phosphate: step 4/6. Bifunctional enzyme that catalyzes the enolization of 2,3-diketo-5-methylthiopentyl-1-phosphate (DK-MTP-1-P) into the intermediate 2-hydroxy-3-keto-5-methylthiopentenyl-1-phosphate (HK-MTPenyl-1-P), which is then dephosphorylated to form the acireductone 1,2-dihydroxy-3-keto-5-methylthiopentene (DHK-MTPene). In Marinobacter nauticus (strain ATCC 700491 / DSM 11845 / VT8) (Marinobacter aquaeolei), this protein is Enolase-phosphatase E1.